The primary structure comprises 362 residues: Peptide chain release factor 1 (362 aa).

Glutamine 238 carries the post-translational modification N5-methylglutamine.

Belongs to the prokaryotic/mitochondrial release factor family. In terms of processing, methylated by PrmC. Methylation increases the termination efficiency of RF1.

The protein resides in the cytoplasm. Peptide chain release factor 1 directs the termination of translation in response to the peptide chain termination codons UAG and UAA. The chain is Peptide chain release factor 1 from Psychrobacter cryohalolentis (strain ATCC BAA-1226 / DSM 17306 / VKM B-2378 / K5).